A 262-amino-acid polypeptide reads, in one-letter code: Acyl-[acyl-carrier-protein]--UDP-N-acetylglucosamine O-acyltransferase (262 aa).

This sequence belongs to the transferase hexapeptide repeat family. LpxA subfamily. In terms of assembly, homotrimer.

The protein resides in the cytoplasm. The enzyme catalyses a (3R)-hydroxyacyl-[ACP] + UDP-N-acetyl-alpha-D-glucosamine = a UDP-3-O-[(3R)-3-hydroxyacyl]-N-acetyl-alpha-D-glucosamine + holo-[ACP]. It functions in the pathway glycolipid biosynthesis; lipid IV(A) biosynthesis; lipid IV(A) from (3R)-3-hydroxytetradecanoyl-[acyl-carrier-protein] and UDP-N-acetyl-alpha-D-glucosamine: step 1/6. Functionally, involved in the biosynthesis of lipid A, a phosphorylated glycolipid that anchors the lipopolysaccharide to the outer membrane of the cell. This chain is Acyl-[acyl-carrier-protein]--UDP-N-acetylglucosamine O-acyltransferase, found in Escherichia coli O157:H7.